Reading from the N-terminus, the 375-residue chain is 23S rRNA (uracil(747)-C(5))-methyltransferase RlmC (375 aa).

Residues Cys3, Cys11, Cys14, and Cys87 each coordinate [4Fe-4S] cluster. Positions 212, 241, 262, and 307 each coordinate S-adenosyl-L-methionine. The active-site Nucleophile is the Cys334.

It belongs to the class I-like SAM-binding methyltransferase superfamily. RNA M5U methyltransferase family. RlmC subfamily.

The catalysed reaction is uridine(747) in 23S rRNA + S-adenosyl-L-methionine = 5-methyluridine(747) in 23S rRNA + S-adenosyl-L-homocysteine + H(+). Functionally, catalyzes the formation of 5-methyl-uridine at position 747 (m5U747) in 23S rRNA. This chain is 23S rRNA (uracil(747)-C(5))-methyltransferase RlmC, found in Salmonella enteritidis PT4 (strain P125109).